Here is a 130-residue protein sequence, read N- to C-terminus: Phosphomevalonate dehydratase small subunit (130 aa).

The Proton acceptor role is filled by Ser-62.

Belongs to the AcnX type II small subunit family. Heterodimer composed of a large subunit (PMDh-L) and a small subunit (PMDh-S).

The catalysed reaction is (R)-5-phosphomevalonate = (2E)-3-methyl-5-phosphooxypent-2-enoate + H2O. The protein operates within isoprenoid biosynthesis; isopentenyl diphosphate biosynthesis via mevalonate pathway. Functionally, component of a hydro-lyase that catalyzes the dehydration of mevalonate 5-phosphate (MVA5P) to form trans-anhydromevalonate 5-phosphate (tAHMP). Involved in the archaeal mevalonate (MVA) pathway, which provides fundamental precursors for isoprenoid biosynthesis, such as isopentenyl diphosphate (IPP) and dimethylallyl diphosphate (DMAPP). This chain is Phosphomevalonate dehydratase small subunit, found in Thermococcus sibiricus (strain DSM 12597 / MM 739).